Consider the following 955-residue polypeptide: MSGQAEGSTNTEEVPRFRYTAQTAAEIEQRWQRRWEELGTFHAPNPAGSLKGEVSDEKLFVQDMFPYPSGSGLHVGHPLGFIGTDVYARFNRMLGKNVLHTMGFDSFGLPAEQYAVQTGTHPRTTTEKNIERYLTQIRRLGLGHDERRRVATTDIPFYRWTQWIFLQIFHSWYDTDADRARPISELEAQFAAGERATPDGRPWAELSRTEQRRIIDSYRLVYLSEAPVNWAPGLGTVVANEEVTADGLTERGNFPVFRRNLKQWMMRITAYADRLIDDLDRLDWPDKIKTMQRNWIGRSQGANVVFPLDGSAGSIEVFTTRPDTLFGVTYLVLAPEHPLVDELTAAQWPQDPDLRWTGGAATPAEAVAQYRRAASMKSDLDRQENKEKTGVFTGAWATNPVNGEQVPVFIADYVLMGYGTGAIMAVPGEDQRDFDFAEAFGLPVVRTVQPSEGFEGGAYSGEGPRINSANPDVGLDLNGMHLDEAKKTIIEWLESHKHGSGTVQYKLRDWLFARQRYWGEPFPVVYDSDGIPLGLPESELPVVLPEVADYSPRTFDPEDADSRPEPPLAKATEWANVELDLGDGLKNYERDTNVMPQWAGSCWYQLRYIDPDNDQAFVDPANERYWMGKRPELHGPDDPGGLDLYIGGVEHGVLHLLYSRFWHKVLYDLGHVSSEEPYRRLYNQGYIQAYAYTDSRGVYVPAEEVEERDGKFFFQGEEVRREYGKMGKSLKNSVSPDEMADAYGADTLRLYEMAMGPLDASRPWATKDVVGSHRFLQRLWRNVVDENTGELRVTDDEPAIEVLRALHKTIAGVREDYRELRFNTAVAKLIELNNLLTKEYSATGAPRAVVGPLVLMVAPLAPHMAEELWSKLGHDGSLAHGPFPEADEQYLVEDTVEYPIQFNGKVRSRIVVPASAGQDEVKAAALADEKVVAALDGREPRKVIVVPGRLVNVVG.

The 'HIGH' region signature appears at 66–77; it reads PYPSGSGLHVGH. Positions 725–729 match the 'KMSKS' region motif; sequence KMGKS. Lys-728 contacts ATP.

This sequence belongs to the class-I aminoacyl-tRNA synthetase family.

It is found in the cytoplasm. The enzyme catalyses tRNA(Leu) + L-leucine + ATP = L-leucyl-tRNA(Leu) + AMP + diphosphate. The protein is Leucine--tRNA ligase of Saccharopolyspora erythraea (strain ATCC 11635 / DSM 40517 / JCM 4748 / NBRC 13426 / NCIMB 8594 / NRRL 2338).